We begin with the raw amino-acid sequence, 79 residues long: Submaxillary gland androgen-regulated protein 3B (79 aa).

A signal peptide spans 1 to 22 (MKSLTWILGLWALAACFTPGES). Residues 19–79 (PGESQRGPRG…GIFPPPPPQP (61 aa)) are disordered. Position 23 is a pyrrolidone carboxylic acid (Gln-23). Positions 28–79 (GPYPPGPLAPPQPFGPGFVPPPPPPPYGPGRIPPPPPAPYGPGIFPPPPPQP) are enriched in pro residues.

Belongs to the PROL1/PROL3 family. P-A and D1A are probably degradation products of P-B. Secreted into saliva by submaxillary gland. Not expressed in heart, brain, lung, liver, skeletal muscle, Kidney, pancreas or placenta.

The protein localises to the secreted. In Homo sapiens (Human), this protein is Submaxillary gland androgen-regulated protein 3B (SMR3B).